We begin with the raw amino-acid sequence, 507 residues long: RNA-splicing ligase RtcB homolog (507 aa).

Aspartate 121, cysteine 124, histidine 229, histidine 261, and histidine 355 together coordinate Mn(2+). Residue 228–232 coordinates GMP; the sequence is NHYAE. GMP contacts are provided by residues 355 to 356, 404 to 407, serine 411, 430 to 433, and lysine 506; these read HN, GGTM, and HGAG. The active-site GMP-histidine intermediate is histidine 430.

Belongs to the RtcB family. In terms of assembly, catalytic component of the tRNA-splicing ligase complex. Mn(2+) is required as a cofactor.

The enzyme catalyses a 3'-end 3'-phospho-ribonucleotide-RNA + a 5'-end dephospho-ribonucleoside-RNA + GTP = a ribonucleotidyl-ribonucleotide-RNA + GMP + diphosphate. It carries out the reaction a 3'-end 2',3'-cyclophospho-ribonucleotide-RNA + a 5'-end dephospho-ribonucleoside-RNA + GTP + H2O = a ribonucleotidyl-ribonucleotide-RNA + GMP + diphosphate + H(+). In terms of biological role, catalytic subunit of the tRNA-splicing ligase complex that acts by directly joining spliced tRNA halves to mature-sized tRNAs by incorporating the precursor-derived splice junction phosphate into the mature tRNA as a canonical 3',5'-phosphodiester. May act as an RNA ligase with broad substrate specificity, and may function toward other RNAs. The chain is RNA-splicing ligase RtcB homolog from Plasmodium yoelii yoelii.